The chain runs to 334 residues: Formylmethanofuran--tetrahydromethanopterin formyltransferase (334 aa).

It belongs to the FTR family. As to quaternary structure, homotetramer.

It localises to the cytoplasm. The enzyme catalyses N-formylmethanofuran + 5,6,7,8-tetrahydromethanopterin + H(+) = N(5)-formyl-5,6,7,8-tetrahydromethanopterin + methanofuran. It participates in one-carbon metabolism; formaldehyde degradation; formate from formaldehyde (H(4)MPT route): step 4/5. In terms of biological role, catalyzes the transfer of a formyl group from 5-formyl tetrahydromethanopterin (5-formyl-H(4)MPT) to methanofuran (MFR) to produce formylmethanofuran (formyl-MFR) and tetrahydromethanopterin (H(4)MPT). The protein is Formylmethanofuran--tetrahydromethanopterin formyltransferase of Rhodopirellula baltica (strain DSM 10527 / NCIMB 13988 / SH1).